Here is a 345-residue protein sequence, read N- to C-terminus: RNA polymerase II holoenzyme cyclin-like subunit (345 aa).

In terms of domain architecture, Cyclin N-terminal spans 53-144 (QQINRLGKRM…IGECEFYLIS (92 aa)). The disordered stretch occupies residues 256 to 285 (GLTPQSSSGLQAMLPPQSPAGEGPAEGNKN).

It belongs to the cyclin family. Cyclin C subfamily. In terms of assembly, component of the srb8-11 complex, a regulatory module of the Mediator complex.

Its subcellular location is the nucleus. Component of the srb8-11 complex. The srb8-11 complex is a regulatory module of the Mediator complex which is itself involved in regulation of basal and activated RNA polymerase II-dependent transcription. The srb8-11 complex may be involved in the transcriptional repression of a subset of genes regulated by Mediator. It may inhibit the association of the Mediator complex with RNA polymerase II to form the holoenzyme complex. The srb8-11 complex phosphorylates the C-terminal domain (CTD) of the largest subunit of RNA polymerase II. This chain is RNA polymerase II holoenzyme cyclin-like subunit (ssn8), found in Neurospora crassa (strain ATCC 24698 / 74-OR23-1A / CBS 708.71 / DSM 1257 / FGSC 987).